The following is an 88-amino-acid chain: MSKVAAVLKVMPDSPDIDLDGLEADLSESLPDGAEINGTDTEEVAFGLTALLTTVIVPDDSGGTEAVEDAFGAVDDVESVSVEEVGRL.

Belongs to the EF-1-beta/EF-1-delta family.

Functionally, promotes the exchange of GDP for GTP in EF-1-alpha/GDP, thus allowing the regeneration of EF-1-alpha/GTP that could then be used to form the ternary complex EF-1-alpha/GTP/AAtRNA. This Halobacterium salinarum (strain ATCC 29341 / DSM 671 / R1) protein is Elongation factor 1-beta.